A 156-amino-acid chain; its full sequence is Cytochrome c-type biogenesis protein CcmE (156 aa).

The Cytoplasmic portion of the chain corresponds to 1–8 (MNPLRRKR). A helical; Signal-anchor for type II membrane protein transmembrane segment spans residues 9–29 (LLIILAILAGVGIAVGLAMSA). At 30-156 (LRENINLFYT…RIRSLPRRAK (127 aa)) the chain is on the periplasmic side. Heme-binding residues include His-124 and Tyr-128.

The protein belongs to the CcmE/CycJ family.

It localises to the cell inner membrane. In terms of biological role, heme chaperone required for the biogenesis of c-type cytochromes. Transiently binds heme delivered by CcmC and transfers the heme to apo-cytochromes in a process facilitated by CcmF and CcmH. The chain is Cytochrome c-type biogenesis protein CcmE from Pseudomonas fluorescens.